Here is a 169-residue protein sequence, read N- to C-terminus: N5-carboxyaminoimidazole ribonucleotide mutase (169 aa).

Substrate-binding residues include Ser-16, Asp-19, and Arg-46.

Belongs to the AIR carboxylase family. Class I subfamily.

It carries out the reaction 5-carboxyamino-1-(5-phospho-D-ribosyl)imidazole + H(+) = 5-amino-1-(5-phospho-D-ribosyl)imidazole-4-carboxylate. It participates in purine metabolism; IMP biosynthesis via de novo pathway; 5-amino-1-(5-phospho-D-ribosyl)imidazole-4-carboxylate from 5-amino-1-(5-phospho-D-ribosyl)imidazole (N5-CAIR route): step 2/2. Its function is as follows. Catalyzes the conversion of N5-carboxyaminoimidazole ribonucleotide (N5-CAIR) to 4-carboxy-5-aminoimidazole ribonucleotide (CAIR). This Escherichia coli O157:H7 protein is N5-carboxyaminoimidazole ribonucleotide mutase.